Here is a 346-residue protein sequence, read N- to C-terminus: Protein RecA (346 aa).

G66–T73 serves as a coordination point for ATP.

It belongs to the RecA family.

The protein resides in the cytoplasm. Can catalyze the hydrolysis of ATP in the presence of single-stranded DNA, the ATP-dependent uptake of single-stranded DNA by duplex DNA, and the ATP-dependent hybridization of homologous single-stranded DNAs. It interacts with LexA causing its activation and leading to its autocatalytic cleavage. The protein is Protein RecA of Aromatoleum aromaticum (strain DSM 19018 / LMG 30748 / EbN1) (Azoarcus sp. (strain EbN1)).